Reading from the N-terminus, the 339-residue chain is MLDPRAQTLLKTLIERYIAEGQPVGSRTLSRYSGLELSPATIRNVMSDLEDLGLVISPHTSAGRIPTPRGYRLFVDTMLTVESAADEEAVMRTVKTTLQAGEPQKIVAAAASVLSNLSQFAGVVLTPRRSHVFKQIEFMRLSDKRILLIIVTPEGDVQNRIMATQRDFSPSQLVEASNYINAHFAGLSFDDVRRRLREEIDELRGDMTTLMHAAVTASTDEADTGETVLISGERNLLEVADLSSDMARLRKLFDVFDQKTSLLQLLDVSSHAAGVQIFIGGESNLVPIEEMSVVTAPYEVNGKIVGTLGVIGPTRMAYNRVIPIVDITARLLSLTLSQQ.

It belongs to the HrcA family.

Its function is as follows. Negative regulator of class I heat shock genes (grpE-dnaK-dnaJ and groELS operons). Prevents heat-shock induction of these operons. This Paraburkholderia xenovorans (strain LB400) protein is Heat-inducible transcription repressor HrcA.